Here is a 118-residue protein sequence, read N- to C-terminus: D-dopachrome decarboxylase (118 aa).

Proline 2 is modified (N-acetylproline). Lysine 33 is modified (N6-acetyllysine).

The protein belongs to the MIF family. Homotrimer. As to expression, highly expressed in the liver and at lower levels in the heart, lung and pancreas.

The protein localises to the cytoplasm. The catalysed reaction is D-dopachrome + H(+) = 5,6-dihydroxyindole + CO2. Functionally, tautomerization of D-dopachrome with decarboxylation to give 5,6-dihydroxyindole (DHI). This Homo sapiens (Human) protein is D-dopachrome decarboxylase (DDT).